We begin with the raw amino-acid sequence, 599 residues long: Elongation factor 4 (599 aa).

One can recognise a tr-type G domain in the interval 2–184 (KNIRNFSIIA…RLVRDIPPPQ (183 aa)). Residues 14–19 (DHGKST) and 131–134 (NKID) each bind GTP.

It belongs to the TRAFAC class translation factor GTPase superfamily. Classic translation factor GTPase family. LepA subfamily.

The protein resides in the cell inner membrane. It carries out the reaction GTP + H2O = GDP + phosphate + H(+). Required for accurate and efficient protein synthesis under certain stress conditions. May act as a fidelity factor of the translation reaction, by catalyzing a one-codon backward translocation of tRNAs on improperly translocated ribosomes. Back-translocation proceeds from a post-translocation (POST) complex to a pre-translocation (PRE) complex, thus giving elongation factor G a second chance to translocate the tRNAs correctly. Binds to ribosomes in a GTP-dependent manner. The chain is Elongation factor 4 from Salmonella agona (strain SL483).